Consider the following 2439-residue polypeptide: MVQRWLLLSCCGALLSAGLANTSYTSPGLQRLKDSPQTAPDKGQCSTWGAGHFSTFDHHVYDFSGTCNYIFAATCKDAFPTFSVQLRRGPDGSISRIIVELGASVVTVSEAIISVKDIGVISLPYTSNGLQITPFGQSVRLVAKQLELELEVVWGPDSHLMVLVERKYMGQMCGLCGNFDGKVTNEFVSEEGKFLEPHKFAALQKLDDPGEICTFQDIPSTHVRQAQHARICTQLLTLVAPECSVSKEPFVLSCQADVAAAPQPGPQNSSCATLSEYSRQCSMVGQPVRRWRSPGLCSVGQCPANQVYQECGSACVKTCSNPQHSCSSSCTFGCFCPEGTVLNDLSNNHTCVPVTQCPCVLHGAMYAPGEVTIAACQTCRCTLGRWVCTERPCPGHCSLEGGSFVTTFDARPYRFHGTCTYILLQSPQLPEDGALMAVYDKSGVSHSETSLVAVVYLSRQDKIVISQDEVVTNNGEAKWLPYKTRNITVFRQTSTHLQMATSFGLELVVQLRPIFQAYVTVGPQFRGQTRGLCGNFNGDTTDDFTTSMGIAEGTASLFVDSWRAGNCPAALERETDPCSMSQLNKVCAETHCSMLLRTGTVFERCHATVNPAPFYKRCVYQACNYEETFPHICAALGDYVHACSLRGVLLWGWRSSVDNCTIPCTGNTTFSYNSQACERTCLSLSDRATECHHSAVPVDGCNCPDGTYLNQKGECVRKAQCPCILEGYKFILAEQSTVINGITCHCINGRLSCPQRPQMFLASCQAPKTFKSCSQSSENKFGAACAPTCQMLATGVACVPTKCEPGCVCAEGLYENADGQCVPPEECPCEFSGVSYPGGAELHTDCRTCSCSRGRWACQQGTHCPSTCTLYGEGHVITFDGQRFVFDGNCEYILATDVCGVNDSQPTFKILTENVICGNSGVTCSRAIKIFLGGLSVVLADRNYTVTGEEPHVQLGVTPGALSLVVDISIPGRYNLTLIWNRHMTILIRIARASQDPLCGLCGNFNGNMKDDFETRSRYVASSELELVNSWKESPLCGDVSFVTDPCSLNAFRRSWAERKCSVINSQTFATCHSKVYHLPYYEACVRDACGCDSGGDCECLCDAVAAYAQACLDKGVCVDWRTPAFCPIYCGFYNTHTQDGHGEYQYTQEANCTWHYQPCLCPSQPQSVPGSNIEGCYNCSQDEYFDHEEGVCVPCMPPTTPQPPTTPQLPTTGSRPTQVWPMTGTSTTIGLLSSTGPSPSSNHTPASPTQTPLLPATLTSSKPTASSGEPPRPTTAVTPQATSGLPPTATLRSTATKPTVTQATTRATASTASPATTSTAQSTTRTTMTLPTPATSGTSPTLPKSTNQELPGTTATQTTGPRPTPASTTGPTTPQPGQPTRPTATETTQTRTTTEYTTPQTPHTTHSPPTAGSPVPSTGPVTATSFHATTTYPTPSHPETTLPTHVPPFSTSLVTPSTHTVITPTHAQMATSASNHSAPTGTIPPPTTLKATGSTHTAPPITPTTSGTSQAHSSFSTNKTPTSLHSHTSSTHHPEVTPTSTTTITPNPTSTRTRTPVAHTNSATSSRPPPPFTTHSPPTGSSPFSSTGPMTATSFKTTTTYPTPSHPQTTLPTHVPPFSTSLVTPSTHTVITPTHAQMATSASIHSMPTGTIPPPTTLKATGSTHTAPTMTLTTSGTSQALSSLNTAKTSTSLHSHTSSTHHAEATSTSTTNITPNPTSTGTPPMTVTTSGTSQSRSSFSTAKTSTSLHSHTSSTHHPEVTSTSTTSITPNHTSTGTRTPVAHTTSATSSRLPTPFTTHSPPTGTTPISSTGPVTATSFQTTTTYPTPSHPHTTLPTHVPSFSTSLVTPSTHTVIIPTHTQMATSASIHSMPTGTIPPPTTIKATGSTHTAPPMTPTTSGTSQSPSSFSTAKTSTSLPYHTSSTHHPEVTPTSTTNITPKHTSTGTRTPVAHTTSASSSRLPTPFTTHSPPTGSSPFSSTGPMTATSFQTTTTYPTPSHPQTTLPTHVPPFSTSLVTPSTHTVIITTHTQMATSASIHSTPTGTVPPPTTLKATGSTHTAPPMTVTTSGTSQTHSSFSTATASSSFISSSSWLPQNSSSRPPSSPITTQLPHLSSATTPVSTTNQLSSSFSPSPSAPSTVSSYVPSSHSSPQTSSPSVGTSSSFVSAPVHSTTLSSGSHSSLSTHPTTASVSASPLFPSSPAASTTIRATLPHTISSPFTLSALLPISTVTVSPTPSSHLASSTIAFPSTPRTTASTHTAPAFSSQSTTSRSTSLTTRVPTSGFVSLTSGVTGIPTSPVTNLTTRHPGPTLSPTTRFLTSSLTAHGSTPASAPVSSLGTPTPTSPGVCSVREQQEEITFKGCMANVTVTRCEGACISAASFNIITQQVDARCSCCRPLHSYEQQLELPCPDPSTPGRRLVLTLQVFSHCVCSSVACGD.

Positions Met-1–Thr-22 are cleaved as a signal peptide. In terms of domain architecture, VWFD 1 spans Gly-43–Thr-214. Cystine bridges form between Cys-45–Cys-176 and Cys-67–Cys-213. N-linked (GlcNAc...) asparagine glycosylation occurs at Asn-268. Residues Cys-302–Cys-357 form the TIL domain. Residues Gly-395 to Ser-579 form the VWFD 2 domain. 2 disulfides stabilise this stretch: Cys-397–Cys-533 and Cys-419–Cys-578. Residues Asn-486 and Asn-659 are each glycosylated (N-linked (GlcNAc...) asparagine). Positions Ser-866 to Gly-1038 constitute a VWFD 3 domain. Disulfide bonds link Cys-868/Cys-1002, Cys-890/Cys-1037, Cys-899/Cys-999, and Cys-917/Cys-924. Asn-975 and Asn-1179 each carry an N-linked (GlcNAc...) asparagine glycan. Disordered regions lie at residues Pro-1202–Val-1455, Ala-1471–Pro-1626, Ser-1642–Thr-1834, Ser-1868–Pro-1983, Ala-2033–Ser-2077, Ser-2090–Pro-2196, Val-2233–Thr-2278, and Leu-2323–Val-2348. The segment covering Thr-1224–Thr-1265 has biased composition (low complexity). Residues Thr-1276–Leu-1286 are compositionally biased toward polar residues. Residues Ser-1294–Thr-1339 show a composition bias toward low complexity. The span at Ser-1340–Leu-1351 shows a compositional bias: polar residues. Low complexity-rich tracts occupy residues Pro-1352–Thr-1373 and Thr-1381–Pro-1415. Polar residues-rich tracts occupy residues Val-1416–Val-1455, Ala-1471–Thr-1481, and Leu-1490–Lys-1520. Composition is skewed to low complexity over residues Thr-1521–Ser-1567 and Thr-1574–Thr-1611. The 1; truncated repeat unit spans residues Thr-1561 to Ser-1738. The approximate repeats stretch occupies residues His-1607–His-1953. The segment covering Leu-1659–Asn-1686 has biased composition (polar residues). The span at Thr-1687 to Ser-1768 shows a compositional bias: low complexity. The span at Ile-1769–Leu-1793 shows a compositional bias: polar residues. Repeat 2 spans residues Thr-1785–His-1953. Low complexity-rich tracts occupy residues Pro-1794–Thr-1834 and Thr-1891–Ser-1917. Positions Leu-1918–Leu-1962 are enriched in polar residues. The segment covering Pro-1963–Pro-1983 has biased composition (low complexity). Residues Leu-2052–Gly-2070 show a composition bias toward polar residues. Positions Ser-2090–Pro-2102 are enriched in low complexity. Positions Ile-2107–Pro-2120 are enriched in polar residues. Residues Val-2121–Pro-2196 show a composition bias toward low complexity. The span at His-2240–Phe-2264 shows a compositional bias: polar residues. Positions Ser-2265–Thr-2278 are enriched in low complexity. The segment covering Leu-2323–Gly-2347 has biased composition (polar residues). 4 disulfide bridges follow: Cys-2349-Cys-2396, Cys-2363-Cys-2410, Cys-2372-Cys-2430, and Cys-2376-Cys-2432. In terms of domain architecture, CTCK spans Cys-2349–Gly-2438.

In terms of assembly, multimer; disulfide-linked. Post-translationally, O-glycosylated. Expressed in the regenerative zone of gastric antrum, gastric body mucosa and gastric incisura mucosa. Expressed in the deeper mucous glands of gastric antrum. Overexpressed in Helicobacter pylori infected gastric epithelium. Highly expressed in duodenal Brunner's glands, gall bladder, seminal vesicle, pancreatic centroacinar cells and ducts, and periductal glands of the common bile duct.

It localises to the secreted. Its function is as follows. May provide a mechanism for modulation of the composition of the protective mucus layer related to acid secretion or the presence of bacteria and noxious agents in the lumen. Plays an important role in the cytoprotection of epithelial surfaces and are used as tumor markers in a variety of cancers. May play a role in epithelial organogenesis. This Homo sapiens (Human) protein is Mucin-6 (MUC6).